The chain runs to 400 residues: 2'-5'-oligoadenylate synthase 1 (400 aa).

The interval 13 to 60 is interaction with dsRNA; that stretch reads DKFIEDYLLPDTCFRMQINHAIDIICGFLKERCFRGSSYPVCVSKVVK. Ser-63 lines the ATP pocket. Mg(2+) contacts are provided by Asp-75, Asp-77, and Asp-148. An interaction with dsRNA region spans residues 200 to 210; the sequence is QRPTKLKSLIR. The ATP site is built by Arg-210, Lys-213, and Gln-229. Cys-397 carries the S-geranylgeranyl cysteine lipid modification.

This sequence belongs to the 2-5A synthase family. As to quaternary structure, monomer. Homotetramer. The cofactor is Mg(2+). In terms of processing, prenylated at C-terminal. C-terminal prenylation is necessary to initiate a block to SARS-CoV-2 and is associated with protection from severe COVID-1. The prenylated form is targeted to perinuclear structures rich in viral dsRNA, whereas the non-prenylated form is diffusely localized and unable to initiate a detectable block to SARS-CoV-2 replication. C-terminal prenylation is also necessary to initiate a block to cardiovirus EMCV. Post-translationally, not prenylated at C-terminal. The non-prenylated form is diffusely localized and unable to initiate a detectable block to SARS-CoV-2 replication. Expressed in lungs.

It is found in the cytoplasm. It localises to the mitochondrion. The protein localises to the nucleus. The protein resides in the microsome. Its subcellular location is the endoplasmic reticulum. It is found in the secreted. It catalyses the reaction 3 ATP = 5'-triphosphoadenylyl-(2'-&gt;5')-adenylyl-(2'-&gt;5')-adenosine + 2 diphosphate. Its activity is regulated as follows. Produced as a latent enzyme which is activated by dsRNA generated during the course of viral infection. The dsRNA activator must be at least 15 nucleotides long, and no modification of the 2'-hydroxyl group is tolerated. ssRNA or dsDNA do not act as activators. In terms of biological role, interferon-induced, dsRNA-activated antiviral enzyme which plays a critical role in cellular innate antiviral response. In addition, it may also play a role in other cellular processes such as apoptosis, cell growth, differentiation and gene regulation. Synthesizes higher oligomers of 2'-5'-oligoadenylates (2-5A) from ATP which then bind to the inactive monomeric form of ribonuclease L (RNase L) leading to its dimerization and subsequent activation. Activation of RNase L leads to degradation of cellular as well as viral RNA, resulting in the inhibition of protein synthesis, thus terminating viral replication. Can mediate the antiviral effect via the classical RNase L-dependent pathway or an alternative antiviral pathway independent of RNase L. The secreted form displays antiviral effect against vesicular stomatitis virus (VSV), herpes simplex virus type 2 (HSV-2), and encephalomyocarditis virus (EMCV) and stimulates the alternative antiviral pathway independent of RNase L. Its function is as follows. When prenylated at C-terminal, acts as a double-stranded RNA (dsRNA) sensor specifically targeted to membranous replicative organelles in SARS coronavirus-2/SARS-CoV-2 infected cells where it binds to dsRNA structures in the SARS-CoV-2 5'-UTR and initiates a potent block to SARS-CoV-2 replication. Recognizes short stretches of dsRNA and activates RNase L. The binding is remarkably specific, with two conserved stem loops in the SARS-CoV-2 5'- untranslated region (UTR) constituting the principal viral target. The same mechanism is necessary to initiate a block to cardiovirus EMCV. Not prenylated at C-terminal, is diffusely localized and unable to initiate a detectable block to SARS-CoV-2 replication. In Homo sapiens (Human), this protein is 2'-5'-oligoadenylate synthase 1 (OAS1).